The following is a 231-amino-acid chain: Probable intron-encoded endonuclease 1 (231 aa).

It belongs to the LAGLIDADG endonuclease family.

It localises to the mitochondrion. Functionally, endonuclease involved in mitochondrial 21S rRNA gene intron homing. In Wickerhamomyces canadensis (Yeast), this protein is Probable intron-encoded endonuclease 1.